Here is a 291-residue protein sequence, read N- to C-terminus: F-box protein PP2-A12 (291 aa).

The F-box domain occupies 25 to 71; the sequence is KPGLGDLPEACVAIIVENLDPVEICRFSKLNRAFRGASWADCVWESK.

This Arabidopsis thaliana (Mouse-ear cress) protein is F-box protein PP2-A12 (P2A12).